Consider the following 314-residue polypeptide: Hydroxyacyl-coenzyme A dehydrogenase, mitochondrial (314 aa).

The transit peptide at 1–12 (MAFVTRQFMRSV) directs the protein to the mitochondrion. Residues 34–39 (GGGLMG) and Asp57 contribute to the NAD(+) site. CoA contacts are provided by Ser73 and Lys80. An N6-succinyllysine modification is found at Lys80. An N6-acetyllysine; alternate mark is found at Lys81 and Lys87. Residues Lys81 and Lys87 each carry the N6-succinyllysine; alternate modification. Glu122 contributes to the NAD(+) binding site. N6-acetyllysine is present on Lys125. An NAD(+)-binding site is contributed by Lys127. An N6-(2-hydroxyisobutyryl)lysine modification is found at Lys127. Lys136 carries the N6-acetyllysine; alternate modification. An N6-succinyllysine; alternate modification is found at Lys136. Ser149 and Asn173 together coordinate NAD(+). Ser149 contributes to the CoA binding site. N6-acetyllysine is present on Lys179. N6-acetyllysine; alternate is present on residues Lys185, Lys192, and Lys202. Residues Lys185, Lys192, and Lys202 each carry the N6-succinyllysine; alternate modification. Lys206 carries the N6-succinyllysine modification. N6-acetyllysine; alternate is present on residues Lys212 and Lys241. Lys212 and Lys241 each carry N6-succinyllysine; alternate. Lys305 is a binding site for NAD(+). At Lys312 the chain carries N6-acetyllysine; alternate. N6-succinyllysine; alternate is present on Lys312.

It belongs to the 3-hydroxyacyl-CoA dehydrogenase family. Homodimer. Interacts with GLUD1; this interaction inhibits the activation of glutamate dehydrogenase 1 (GLUD1). In terms of processing, succinylation at Lys-81, adjacent to a coenzyme A binding site. Desuccinylated by SIRT5. In terms of tissue distribution, expressed in liver, kidney, pancreas, heart and skeletal muscle.

The protein resides in the mitochondrion matrix. It carries out the reaction a (3S)-3-hydroxyacyl-CoA + NAD(+) = a 3-oxoacyl-CoA + NADH + H(+). The catalysed reaction is (3S)-3-hydroxybutanoyl-CoA + NAD(+) = acetoacetyl-CoA + NADH + H(+). The enzyme catalyses (3S)-hydroxydecanoyl-CoA + NAD(+) = 3-oxodecanoyl-CoA + NADH + H(+). It catalyses the reaction (3S)-hydroxyhexadecanoyl-CoA + NAD(+) = 3-oxohexadecanoyl-CoA + NADH + H(+). It participates in lipid metabolism; fatty acid beta-oxidation. In terms of biological role, mitochondrial fatty acid beta-oxidation enzyme that catalyzes the third step of the beta-oxidation cycle for medium and short-chain 3-hydroxy fatty acyl-CoAs (C4 to C10). Plays a role in the control of insulin secretion by inhibiting the activation of glutamate dehydrogenase 1 (GLUD1), an enzyme that has an important role in regulating amino acid-induced insulin secretion. Plays a role in the maintenance of normal spermatogenesis through the reduction of fatty acid accumulation in the testes. The protein is Hydroxyacyl-coenzyme A dehydrogenase, mitochondrial (HADH) of Homo sapiens (Human).